Here is a 591-residue protein sequence, read N- to C-terminus: Oxaloacetate decarboxylase alpha chain (591 aa).

Residues 3–263 form the Pyruvate carboxyltransferase domain; sequence IAITDVVLRD…DTGLDILKLE (261 aa). Residues 518–591 form the Biotinyl-binding domain; sequence PAGAGTPVTA…SVGDTLMTLA (74 aa). Lys-557 carries the post-translational modification N6-biotinyllysine.

In terms of assembly, composed of three chains (alpha, beta, and gamma). Biotin serves as cofactor.

It catalyses the reaction oxaloacetate + 2 Na(+)(in) + H(+) = pyruvate + 2 Na(+)(out) + CO2. Functionally, catalyzes the decarboxylation of oxaloacetate coupled to Na(+) translocation. The protein is Oxaloacetate decarboxylase alpha chain (oadA1) of Salmonella typhi.